We begin with the raw amino-acid sequence, 146 residues long: MGFTEKQEALVNSSWELFKQNPGNSVLFYTIILEKAPAAKGMFSFLKDTAGVQDSPKLQSHAEKVFGMVRDSAVQLRATGGVVLGDATLGAIHIQKGVVDPHFVVVKEALLKTIKEVSGDKWSEELSTAWEVAYDALAAAIKKAMG.

One can recognise a Globin domain in the interval 2-146 (GFTEKQEALV…LAAAIKKAMG (145 aa)). Tyr29 is subject to Nitrated tyrosine. Ser44 contributes to the heme b binding site. Phosphoserine is present on Ser44. His61 is an O2 binding site. Positions 64, 93, and 96 each coordinate heme b. Position 134 is a nitrated tyrosine (Tyr134).

It belongs to the plant globin family. Monomer. Post-translationally, nitrated in effective nodules and particularly in hypoxic conditions; this mechanism may play a protective role in the symbiosis by buffering toxic peroxynitrite NO(2)(-). Nitration level decrease during nodule senescence. In terms of processing, phosphorylation at Ser-44 disrupts the molecular environment of its porphyrin ring oxygen binding pocket, thus leading to a reduced oxygen consumption and to the delivery of oxygen O(2) to symbiosomes. Root nodules.

It localises to the cytoplasm. It is found in the cytosol. Its subcellular location is the nucleus. Leghemoglobin that reversibly binds oxygen O(2) through a pentacoordinated heme iron. In root nodules, facilitates the diffusion of oxygen to the bacteroids while preventing the bacterial nitrogenase from being inactivated by buffering dioxygen, nitric oxide and carbon monoxide, and promoting the formation of reactive oxygen species (ROS, e.g. H(2)O(2)). This role is essential for symbiotic nitrogen fixation (SNF). This Medicago truncatula (Barrel medic) protein is Leghemoglobin 1.